The primary structure comprises 479 residues: Aspartyl/glutamyl-tRNA(Asn/Gln) amidotransferase subunit B (479 aa).

It belongs to the GatB/GatE family. GatB subfamily. As to quaternary structure, heterotrimer of A, B and C subunits.

The enzyme catalyses L-glutamyl-tRNA(Gln) + L-glutamine + ATP + H2O = L-glutaminyl-tRNA(Gln) + L-glutamate + ADP + phosphate + H(+). It carries out the reaction L-aspartyl-tRNA(Asn) + L-glutamine + ATP + H2O = L-asparaginyl-tRNA(Asn) + L-glutamate + ADP + phosphate + 2 H(+). Functionally, allows the formation of correctly charged Asn-tRNA(Asn) or Gln-tRNA(Gln) through the transamidation of misacylated Asp-tRNA(Asn) or Glu-tRNA(Gln) in organisms which lack either or both of asparaginyl-tRNA or glutaminyl-tRNA synthetases. The reaction takes place in the presence of glutamine and ATP through an activated phospho-Asp-tRNA(Asn) or phospho-Glu-tRNA(Gln). This is Aspartyl/glutamyl-tRNA(Asn/Gln) amidotransferase subunit B from Streptococcus suis (strain 98HAH33).